A 242-amino-acid chain; its full sequence is DNA repair protein RecO (242 aa).

The protein belongs to the RecO family.

Functionally, involved in DNA repair and RecF pathway recombination. This chain is DNA repair protein RecO, found in Methylococcus capsulatus (strain ATCC 33009 / NCIMB 11132 / Bath).